Here is a 442-residue protein sequence, read N- to C-terminus: Yes-associated protein homolog 1 (442 aa).

Over residues 1–10 the composition is skewed to basic residues; it reads MASKSIHKKH. Residues 1–84 are disordered; it reads MASKSIHKKH…GSVDESSRTA (84 aa). Composition is skewed to polar residues over residues 13–22 and 55–71; these read NSQQDKNQFS and LPSSYYHQKRNPGSSAH. Serine 104 is modified (phosphoserine). The segment covering 108–120 has biased composition (polar residues); it reads LHTSVNNGQSSAT. The interval 108–136 is disordered; it reads LHTSVNNGQSSATVPHPSHHNVHHQHSKS. Residues 124 to 134 show a composition bias toward basic residues; it reads PSHHNVHHQHS. Residues 203-236 enclose the WW domain; that stretch reads LPMPQGWEMCYDSDGVRYFKDHNSKTTTWDDPRL.

The protein belongs to the YAP1 family. Highly divergent. As to quaternary structure, interacts (via WW domain) with wts-1 (via N-terminus). Interacts (via WW domain) with egl-44; the interaction may regulate transcription. As to expression, expressed in epithelia, hypodermis, muscles, pharynx, intestine, gonadal sheath cells, vulva, spermatheca and in excretory tissue.

The protein resides in the cytoplasm. It is found in the nucleus. It localises to the cell projection. The protein localises to the cilium. Its subcellular location is the cytoskeleton. The protein resides in the cilium axoneme. In terms of biological role, plays a role in thermal stress response and in aging. In Caenorhabditis elegans, this protein is Yes-associated protein homolog 1.